Here is a 374-residue protein sequence, read N- to C-terminus: MAPNNVDNPQNCVVNNTINGGVGVDDEETYGYAAQVLNSCVLPMVLNATIELGVLHLVNQAGSGPDGLSPAQLAALIQARNPDASVMLDRMLRVLATYDVVSCTAVPTEDGGFERRYGPAPVTKCFVPDEDGVSLAPMLNLVIDKVFLQSWSKLKEAVMEGGIPFNKVHGMHAFEYPAVDPRFNEIFNKAMYDQSTHIIKNILAKYKGFSQIQQLVDVGGGLGHTLRVITSKYPSIKGINFDLPHVVEHAPQIPGVEHVGGDMFESVPKGDAIFMKWILHDWSDDKCLTLLKNCYKALPENGMVIAVETNITDQPETTAYARAISQLDVSMMTQNPGGKERTRREFESLAKSAGFARVDFVCCASSFWVMEFHK.

S-adenosyl-L-homocysteine is bound by residues Ser-195, Gly-219, Asp-242, Asp-262, and Lys-276. Asp-242 lines the S-adenosyl-L-methionine pocket. His-280 functions as the Proton acceptor in the catalytic mechanism.

Belongs to the class I-like SAM-binding methyltransferase superfamily. Cation-independent O-methyltransferase family. Homodimer. As to expression, expressed mainly in vasculature and cortex tissues at low levels.

It carries out the reaction dopamine + S-adenosyl-L-methionine = 4-methoxytyramine + S-adenosyl-L-homocysteine + H(+). The protein operates within aromatic compound metabolism. It functions in the pathway alkaloid biosynthesis. In terms of biological role, O-methyltransferase participating in the biosynthesis of natural products derived from phenylethylamine, including mescaline, a natural hallucinogen potentially used in psychotherapeutic treatments. Catalyzes the O-methylation of dopamine to produce 4-methoxytyramine. This Lophophora williamsii (Peyote) protein is O-methyltransferase 16.